We begin with the raw amino-acid sequence, 88 residues long: UPF0297 protein LAR_0520 (88 aa).

It belongs to the UPF0297 family.

In Limosilactobacillus reuteri subsp. reuteri (strain JCM 1112) (Lactobacillus reuteri), this protein is UPF0297 protein LAR_0520.